We begin with the raw amino-acid sequence, 401 residues long: O-methyltransferase mfmE (401 aa).

S-adenosyl-L-methionine contacts are provided by residues 243–244 (GG) and Asp268. His308 acts as the Proton acceptor in catalysis.

This sequence belongs to the class I-like SAM-binding methyltransferase superfamily. Cation-independent O-methyltransferase family. COMT subfamily.

The protein operates within secondary metabolite biosynthesis; terpenoid biosynthesis. O-methyltransferase; part of the gene cluster that mediates the biosynthesis of the phthalide-terpenoid hybrid 11'-O-desmethylfendlerol. Within the pathway, mfmE catalyzes the 7-O-methylation of the phthalide 5,7-dihydroxy-4-(hydroxymethyl)-6-methylphthalide to yield 5-hydroxy-4-(hydroxymethyl)-7-methoxy-6-methylphthalide. The biosynthesis of 11'-O-desmethylfendlerol begins with the NR-PKS mfmB that forms 3,5-dimethylorsellinic acid (DMOA), which is then transformed into the phthalide 5,7-dihydroxy-4-(hydroxymethyl)-6-methylphthalide by the cytochrome P450 monooxygenase mfmA and the hydrolase mfmC. Subsequently, the methyltransferase mfmE catalyzes 7-O-methylation to yield 5-hydroxy-4-(hydroxymethyl)-7-methoxy-6-methylphthalide, which undergoes C-3 hydroxylation by the cytochrome P450 monooxygenase mfmF. The resultant cyclopolic acid (2,5-dihydroxy-4-(hydroxymethyl)-7-methoxy-6-methylphthalide) is then farnesylated by the DMATS-type prenyltransferase mfmD to afford 5-O-farnesylcyclopolic acid. Finally, the Pyr4-family terpene cyclase mfmH cyclizes the farnesyl moiety of 5-O-farnesylcyclopolic acid into a drimane-like structure, thus completing the biosynthesis of 11'-O-desmethylfendlerol. The sequence is that of O-methyltransferase mfmE from Annulohypoxylon moriforme (Filamentous fungus).